The sequence spans 412 residues: MDVNQPKQEHLLALKVMRLTKPTLFTNIPVTCEERDLPGDLFSTLMKDDPSTVKGAETLMLGEMLTLPQNFGNIFLGETFSSYISVHNDSNQVVKDIQVKADLQTSSQRLNLSASTAVVSELKPDSCIDDVIHHEVKEIGTHILVCAVSYTTQTGEKMYFRKFFKFQVLKPLDVKTKFYNAETDEVFLEAQIQNITTSPMFMEKVSLEPSIMYNVSELNTVITNGDGCSTFGTKTYLQPLDTRQYLYCLKPKPEFAEKAGVIKGVTVIGKLDIVWKTNLGERGRLQTSQLQRMAPGYGDVRLSIETIPDTVRLEEPFDITCKITNCSSERTMDLVLEMCNTNAIHWCGVSGRQLGKLHPSSSLHLTLALLSSVQGLQSVSGLRLTDTFLKRTYEYDDIAQVCVVSSKLQAES.

The protein belongs to the TRAPPC13 family. In terms of assembly, part of the multisubunit TRAPP (transport protein particle) complex.

The protein is Trafficking protein particle complex subunit 13 (trappc13) of Xenopus tropicalis (Western clawed frog).